We begin with the raw amino-acid sequence, 220 residues long: Superoxide dismutase [Fe] (220 aa).

Residues His-26, His-73, Asp-164, and His-168 each coordinate Fe cation.

This sequence belongs to the iron/manganese superoxide dismutase family. As to quaternary structure, homodimer. It depends on Fe cation as a cofactor.

It carries out the reaction 2 superoxide + 2 H(+) = H2O2 + O2. Its function is as follows. Destroys superoxide anion radicals which are normally produced within the cells and which are toxic to biological systems. This Campylobacter jejuni subsp. jejuni serotype O:2 (strain ATCC 700819 / NCTC 11168) protein is Superoxide dismutase [Fe] (sodB).